A 141-amino-acid chain; its full sequence is Molybdopterin synthase catalytic subunit 2 (141 aa).

Residues 37–39, 103–104, K119, and 126–128 contribute to the substrate site; these read MIR, HR, and KHQ.

It belongs to the MoaE family. Heterotetramer of 2 MoaD subunits and 2 MoaE subunits. Also stable as homodimer. The enzyme changes between these two forms during catalysis.

It carries out the reaction 2 [molybdopterin-synthase sulfur-carrier protein]-C-terminal-Gly-aminoethanethioate + cyclic pyranopterin phosphate + H2O = molybdopterin + 2 [molybdopterin-synthase sulfur-carrier protein]-C-terminal Gly-Gly + 2 H(+). It participates in cofactor biosynthesis; molybdopterin biosynthesis. In terms of biological role, converts molybdopterin precursor Z into molybdopterin. This requires the incorporation of two sulfur atoms into precursor Z to generate a dithiolene group. The sulfur is provided by MoaD. The polypeptide is Molybdopterin synthase catalytic subunit 2 (moaE2) (Mycobacterium tuberculosis (strain CDC 1551 / Oshkosh)).